The sequence spans 277 residues: Myelin proteolipid protein (277 aa).

Over 2–9 (GLLECCAR) the chain is Cytoplasmic. S-palmitoyl cysteine attachment occurs at residues C6, C7, and C10. The chain crosses the membrane as a helical span at residues 10–36 (CLVGAPFASLVATGLCFFGVALFCGCG). Residues 37 to 63 (HEALTGTEKLIETYFSKNYQDYEYLIN) are Extracellular-facing. A helical membrane pass occupies residues 64 to 88 (VIHAFQYVIYGTASFFFLYGALLLA). Over 89 to 151 (EGFYTTGAVR…LGKWLGHPDK (63 aa)) the chain is Cytoplasmic. C109 carries the S-palmitoyl cysteine lipid modification. At S114 the chain carries Phosphoserine. T116 and T118 each carry phosphothreonine. Residues C139 and C141 are each lipidated (S-palmitoyl cysteine). A helical membrane pass occupies residues 152 to 177 (FVGITYALTVVWLLVFACSAVPVYIY). The Extracellular portion of the chain corresponds to 178–233 (FNTWTTCQSIAFPSKTSASIGSLCADARMYGVLPWNAFPGKVCGSNLLSICKTAEF). Disulfide bonds link C184-C228 and C201-C220. A lipid anchor (O-palmitoyl serine) is attached at S199. A helical transmembrane segment spans residues 234–260 (QMTFHLFIAAFVGAAATLVSLLTFMIA). Over 261 to 277 (ATYNFAVLKLMGRGTKF) the chain is Cytoplasmic.

Belongs to the myelin proteolipid protein family. In terms of assembly, interacts with MAL.

It is found in the cell membrane. The protein localises to the myelin membrane. This is the major myelin protein from the central nervous system. It plays an important role in the formation or maintenance of the multilamellar structure of myelin. This Mus musculus (Mouse) protein is Myelin proteolipid protein (Plp1).